The chain runs to 495 residues: Glutamyl-tRNA(Gln) amidotransferase subunit A (495 aa).

Residues Lys75 and Ser150 each act as charge relay system in the active site. Ser174 acts as the Acyl-ester intermediate in catalysis.

It belongs to the amidase family. GatA subfamily. In terms of assembly, heterotrimer of A, B and C subunits.

It catalyses the reaction L-glutamyl-tRNA(Gln) + L-glutamine + ATP + H2O = L-glutaminyl-tRNA(Gln) + L-glutamate + ADP + phosphate + H(+). Allows the formation of correctly charged Gln-tRNA(Gln) through the transamidation of misacylated Glu-tRNA(Gln) in organisms which lack glutaminyl-tRNA synthetase. The reaction takes place in the presence of glutamine and ATP through an activated gamma-phospho-Glu-tRNA(Gln). The polypeptide is Glutamyl-tRNA(Gln) amidotransferase subunit A (Paraburkholderia xenovorans (strain LB400)).